Consider the following 118-residue polypeptide: uncharacterized protein (118 aa).

The helical transmembrane segment at 95 to 115 (IIINLVIILAMYAPEIIGKLL) threads the bilayer.

The protein belongs to the M.jannaschii MJ0023/MJ0349/MJ1072/MJ1074/MJ1107/MJECL16 family.

The protein localises to the membrane. This is an uncharacterized protein from Methanocaldococcus jannaschii (strain ATCC 43067 / DSM 2661 / JAL-1 / JCM 10045 / NBRC 100440) (Methanococcus jannaschii).